The following is a 150-amino-acid chain: MVHTTSPLLLLLLLSLALVAPSLSARKCSLTGKWTNNLGSIMTIRAVNSRGEFTGTYLTAVADNPGNITLSPLLGIQHKRASQPTFGFTVHWNFSESTTVFTGQCFIDRNGKEVLKTMWLLRSSVNDISYDWKATRVGYNNFTRLCTVEE.

The signal sequence occupies residues 1-24 (MVHTTSPLLLLLLLSLALVAPSLS). The 122-residue stretch at 26-147 (RKCSLTGKWT…GYNNFTRLCT (122 aa)) folds into the Avidin-like domain. Cys-28 and Cys-105 are joined by a disulfide. The biotin site is built by Asn-36, Ser-40, Tyr-57, Thr-59, and Asp-63. Residues Asn-67 and Asn-93 are each glycosylated (N-linked (GlcNAc...) asparagine). Ser-95 and Asn-140 together coordinate biotin. Asn-141 carries N-linked (GlcNAc...) asparagine glycosylation.

Belongs to the avidin/streptavidin family. In terms of assembly, homotetramer.

It is found in the secreted. In terms of biological role, forms a strong non-covalent specific complex with biotin. The sequence is that of Avidin-related protein 4/5 (AVR4) from Gallus gallus (Chicken).